A 75-amino-acid polypeptide reads, in one-letter code: Antitoxin MT0312 (75 aa).

Functionally, antitoxin component of a type II toxin-antitoxin (TA) system. The chain is Antitoxin MT0312 from Mycobacterium tuberculosis (strain CDC 1551 / Oshkosh).